We begin with the raw amino-acid sequence, 325 residues long: DNA-directed RNA polymerase subunit alpha (325 aa).

The alpha N-terminal domain (alpha-NTD) stretch occupies residues 1–231 (MQTSLLKPKI…DQLSVFAALE (231 aa)). The interval 246–325 (IDPILLRPVD…ENWPPAGLDK (80 aa)) is alpha C-terminal domain (alpha-CTD).

Belongs to the RNA polymerase alpha chain family. As to quaternary structure, homodimer. The RNAP catalytic core consists of 2 alpha, 1 beta, 1 beta' and 1 omega subunit. When a sigma factor is associated with the core the holoenzyme is formed, which can initiate transcription.

The catalysed reaction is RNA(n) + a ribonucleoside 5'-triphosphate = RNA(n+1) + diphosphate. DNA-dependent RNA polymerase catalyzes the transcription of DNA into RNA using the four ribonucleoside triphosphates as substrates. The protein is DNA-directed RNA polymerase subunit alpha of Burkholderia multivorans (strain ATCC 17616 / 249).